The chain runs to 269 residues: Regulatory protein RecX (269 aa).

The protein belongs to the RecX family.

It localises to the cytoplasm. Modulates RecA activity. The sequence is that of Regulatory protein RecX from Lactococcus lactis subsp. cremoris (strain SK11).